A 155-amino-acid chain; its full sequence is Microsomal glutathione S-transferase 1 (155 aa).

The Lumenal portion of the chain corresponds to 3–9 (NLSQLME). Residues 10-33 (NEVFMAFASYTTIVLSKMNFMSTA) traverse the membrane as a helical segment. The Cytoplasmic segment spans residues 34–62 (TAFYRLTKKVFANPEDCAGFGKGENAKKY). Arginine 38 is a glutathione binding site. Lysine 42, lysine 55, and lysine 60 each carry N6-acetyllysine. Residues 63 to 96 (LRTDDRVERVRRAHLNDLENIVPFLGIGLLYSLS) traverse the membrane as a helical segment. 4 residues coordinate glutathione: arginine 73, arginine 74, histidine 76, and glutamate 81. The Lumenal segment spans residues 97-99 (GPD). Residues 100-123 (LSTAILHFRLFVRARIYHTIAYLT) form a helical membrane-spanning segment. Glutathione is bound at residue tyrosine 121. The Cytoplasmic segment spans residues 124–128 (PLPQP). Residues 129–148 (NRALAFFIGYGVTLSMAYRL) form a helical membrane-spanning segment. The Lumenal segment spans residues 149 to 155 (LKSKLYL).

The protein belongs to the MAPEG family. Homotrimer; The trimer binds only one molecule of glutathione.

Its subcellular location is the endoplasmic reticulum membrane. The protein localises to the mitochondrion outer membrane. It carries out the reaction RX + glutathione = an S-substituted glutathione + a halide anion + H(+). Its function is as follows. Conjugation of reduced glutathione to a wide number of exogenous and endogenous hydrophobic electrophiles. The sequence is that of Microsomal glutathione S-transferase 1 (MGST1) from Bos taurus (Bovine).